The primary structure comprises 294 residues: Probable porphobilinogen deaminase (294 aa).

C233 carries the post-translational modification S-(dipyrrolylmethanemethyl)cysteine.

It belongs to the HMBS family. The cofactor is dipyrromethane.

It catalyses the reaction 4 porphobilinogen + H2O = hydroxymethylbilane + 4 NH4(+). It participates in porphyrin-containing compound metabolism; protoporphyrin-IX biosynthesis; coproporphyrinogen-III from 5-aminolevulinate: step 2/4. Functionally, tetrapolymerization of the monopyrrole PBG into the hydroxymethylbilane pre-uroporphyrinogen in several discrete steps. The chain is Probable porphobilinogen deaminase from Sulfurisphaera tokodaii (strain DSM 16993 / JCM 10545 / NBRC 100140 / 7) (Sulfolobus tokodaii).